Reading from the N-terminus, the 339-residue chain is Beta-ketoacyl-[acyl-carrier-protein] synthase III (339 aa).

Active-site residues include Cys-121 and His-257. The interval 258 to 262 (QANLR) is ACP-binding. Asn-288 is an active-site residue.

Belongs to the thiolase-like superfamily. FabH family. As to quaternary structure, homodimer.

The protein resides in the cytoplasm. The catalysed reaction is malonyl-[ACP] + propanoyl-CoA + H(+) = 3-oxopentanoyl-[ACP] + CO2 + CoA. The enzyme catalyses 2-methylpropanoyl-CoA + malonyl-[ACP] + H(+) = 4-methyl-3-oxopentanoyl-[ACP] + CO2 + CoA. It catalyses the reaction malonyl-[ACP] + acetyl-CoA + H(+) = 3-oxobutanoyl-[ACP] + CO2 + CoA. It carries out the reaction butanoyl-CoA + malonyl-[ACP] + H(+) = 3-oxohexanoyl-[ACP] + CO2 + CoA. It functions in the pathway lipid metabolism; fatty acid biosynthesis. In terms of biological role, catalyzes the condensation reaction of fatty acid synthesis by the addition to an acyl acceptor of two carbons from malonyl-ACP. Catalyzes the first condensation reaction which initiates fatty acid synthesis and may therefore play a role in governing the total rate of fatty acid production. Possesses both acetoacetyl-ACP synthase and acetyl transacylase activities. Propionyl-CoA and isobutyryl-CoA were the two most preferred substrates, although acetyl-CoA and butyryl-CoA could also be accepted and elongated. Involved in the biosynthesis of R1128 polyketide. The protein is Beta-ketoacyl-[acyl-carrier-protein] synthase III of Streptomyces lividans.